A 171-amino-acid chain; its full sequence is UPF0398 protein spyM18_1659 (171 aa).

It belongs to the UPF0398 family.

This is UPF0398 protein spyM18_1659 from Streptococcus pyogenes serotype M18 (strain MGAS8232).